The sequence spans 151 residues: Protein-export protein SecB (151 aa).

It belongs to the SecB family. As to quaternary structure, homotetramer, a dimer of dimers. One homotetramer interacts with 1 SecA dimer.

Its subcellular location is the cytoplasm. One of the proteins required for the normal export of preproteins out of the cell cytoplasm. It is a molecular chaperone that binds to a subset of precursor proteins, maintaining them in a translocation-competent state. It also specifically binds to its receptor SecA. This Azoarcus sp. (strain BH72) protein is Protein-export protein SecB.